Consider the following 568-residue polypeptide: Multidrug and toxin extrusion protein 1 (568 aa).

Met-1 carries the N-acetylmethionine modification. The Cytoplasmic segment spans residues 1 to 36; that stretch reads MEAPVELGPGGRQASPERRHWLRCLVLSDFREELRA. The helical transmembrane segment at 37–57 threads the bilayer; it reads LLVLACPAFLAQLMVFLISFV. Topologically, residues 58–71 are extracellular; the sequence is SSVFCGHLSKLELN. Residues 72–92 traverse the membrane as a helical segment; sequence AVTLAIAVINVMGVSVGFGLS. At 93-119 the chain is on the cytoplasmic side; sequence SACDTLISQTYGSRNLKHVGVILQRGS. The helical transmembrane segment at 120 to 140 threads the bilayer; that stretch reads LILLLCCLPCWALFLNTQHIL. Residues 141-151 lie on the Extracellular side of the membrane; the sequence is LLFRQDPAVSR. The chain crosses the membrane as a helical span at residues 152–172; that stretch reads LTQTYVTIFIPALPATFLYTL. At 173-175 the chain is on the cytoplasmic side; sequence QVK. The chain crosses the membrane as a helical span at residues 176 to 196; that stretch reads YLLNQGIVLPQVVTGVAANLV. Residues 197 to 214 lie on the Extracellular side of the membrane; sequence NALANYLFVYQLHLGVMG. A helical membrane pass occupies residues 215–235; the sequence is SALANTVAQFTLALLLFLYIL. Residues 236–255 are Cytoplasmic-facing; the sequence is RSKVYQATWGGWSLECLQDW. A helical transmembrane segment spans residues 256–278; sequence ASFFRLAIPSMLMLCMEWWAYEI. The Extracellular portion of the chain corresponds to 279 to 294; sequence GSFLSGILGMVELGAQ. Residues 295 to 315 form a helical membrane-spanning segment; the sequence is SVTYELAVIVYMIPMGLSVAV. Topologically, residues 316–335 are cytoplasmic; sequence NVRVGNALGAGNIEQAKKSS. A helical transmembrane segment spans residues 336–356; it reads AVALLVTELIAVVFCVMLLSC. Over 357 to 369 the chain is Extracellular; that stretch reads KDLVGYIFTSDRD. A helical membrane pass occupies residues 370-390; that stretch reads IIALVAQVTPIYAVSHLFESL. Over 391–407 the chain is Cytoplasmic; sequence AGTSGGILRGSGNQKFG. Residues 408–430 traverse the membrane as a helical segment; sequence AIVNAIGYYVVGLPIGIALMFAA. Over 431–433 the chain is Extracellular; it reads KLG. The helical transmembrane segment at 434–456 threads the bilayer; it reads VIGLWLGIVVCAVSQAVCFLGFI. Residues 457 to 544 lie on the Cytoplasmic side of the membrane; that stretch reads ARLNWTKACQ…LSGKQLALRR (88 aa). A helical membrane pass occupies residues 545 to 565; sequence GLLLLGVILVLLAGILVKVYV. Topologically, residues 566–568 are extracellular; that stretch reads RTQ.

Belongs to the multi antimicrobial extrusion (MATE) (TC 2.A.66.1) family. As to expression, predominantly expressed in kidney and liver.

Its subcellular location is the cell membrane. It is found in the apical cell membrane. The catalysed reaction is thiamine(out) + H(+)(in) = thiamine(in) + H(+)(out). The enzyme catalyses estrone 3-sulfate(in) + H(+)(out) = estrone 3-sulfate(out) + H(+)(in). It catalyses the reaction creatinine(in) + H(+)(out) = creatinine(out) + H(+)(in). It carries out the reaction agmatine(in) + H(+)(out) = agmatine(out) + H(+)(in). Multidrug efflux pump that functions as a H(+)/organic cation antiporter. Plays a physiological role in the excretion of cationic compounds including endogenous metabolites, drugs, toxins through the kidney and liver, into urine and bile respectively. Mediates the efflux of endogenous compounds such as creatinine, vitamin B1/thiamine, agmatine and estrone-3-sulfate. May also contribute to regulate the transport of cationic compounds in testis across the blood-testis-barrier. The polypeptide is Multidrug and toxin extrusion protein 1 (SLC47A1) (Oryctolagus cuniculus (Rabbit)).